The chain runs to 399 residues: Elongation factor Tu (399 aa).

The region spanning 10–209 (KPHVNIGTIG…AVDSYIPTPV (200 aa)) is the tr-type G domain. The G1 stretch occupies residues 19–26 (GHVDHGKT). 19–26 (GHVDHGKT) lines the GTP pocket. A Mg(2+)-binding site is contributed by Thr26. The interval 60–64 (GITIA) is G2. The G3 stretch occupies residues 81 to 84 (DCPG). Residues 81 to 85 (DCPGH) and 136 to 139 (NKAD) contribute to the GTP site. The G4 stretch occupies residues 136–139 (NKAD). A G5 region spans residues 174-176 (SAL).

Belongs to the TRAFAC class translation factor GTPase superfamily. Classic translation factor GTPase family. EF-Tu/EF-1A subfamily. As to quaternary structure, monomer.

It localises to the cytoplasm. The enzyme catalyses GTP + H2O = GDP + phosphate + H(+). GTP hydrolase that promotes the GTP-dependent binding of aminoacyl-tRNA to the A-site of ribosomes during protein biosynthesis. This is Elongation factor Tu from Campylobacter fetus subsp. fetus (strain 82-40).